Here is a 496-residue protein sequence, read N- to C-terminus: Putative BTB/POZ domain and WD-repeat protein R61 (496 aa).

One can recognise a BTB domain in the interval 8 to 78 (SNINLILNDE…MFSDIDIYKN (71 aa)). WD repeat units lie at residues 149–189 (KFPR…FNSK), 208–248 (IFDN…KEFQ), 250–285 (DYKI…RKVL), 291–330 (KSIG…IIKW), 333–371 (VSKS…KILE), and 422–464 (MYFS…DIIY).

Belongs to the mimivirus BTB/WD family.

The chain is Putative BTB/POZ domain and WD-repeat protein R61 from Acanthamoeba polyphaga (Amoeba).